A 546-amino-acid chain; its full sequence is Probable Xaa-Pro aminopeptidase pepP (546 aa).

4 residues coordinate Mn(2+): aspartate 341, aspartate 352, glutamate 475, and glutamate 515.

This sequence belongs to the peptidase M24B family. Mn(2+) serves as cofactor.

It carries out the reaction Release of any N-terminal amino acid, including proline, that is linked to proline, even from a dipeptide or tripeptide.. Functionally, catalyzes the removal of a penultimate prolyl residue from the N-termini of peptides. This chain is Probable Xaa-Pro aminopeptidase pepP (pepP), found in Sclerotinia sclerotiorum (strain ATCC 18683 / 1980 / Ss-1) (White mold).